A 208-amino-acid chain; its full sequence is Harpin secretion protein HrpW (208 aa).

4 helical membrane passes run L2–F22, A46–I66, I149–L169, and V176–W196.

It belongs to the FliP/MopC/SpaP family.

It localises to the cell membrane. Its function is as follows. Required for the secretion of harpin. This chain is Harpin secretion protein HrpW (hrpW), found in Pseudomonas syringae pv. syringae.